We begin with the raw amino-acid sequence, 529 residues long: CTP synthase (529 aa).

The segment at 1–267 (MKEAKFIFVT…DTQILEHFHL (267 aa)) is amidoligase domain. S15 provides a ligand contact to CTP. Residue S15 participates in UTP binding. ATP contacts are provided by residues 16-21 (SLGKGL) and D73. Residues D73 and E141 each coordinate Mg(2+). CTP contacts are provided by residues 148-150 (DIE), 188-193 (KTKPTQ), and K224. Residues 188–193 (KTKPTQ) and K224 contribute to the UTP site. A Glutamine amidotransferase type-1 domain is found at 292-529 (TVSIVGKYTE…SFVKAAIDKK (238 aa)). Position 354 (G354) interacts with L-glutamine. The active-site Nucleophile; for glutamine hydrolysis is the C381. L-glutamine-binding positions include 382–385 (LGMQ), E405, and R459. Residues H504 and E506 contribute to the active site.

This sequence belongs to the CTP synthase family. As to quaternary structure, homotetramer.

The catalysed reaction is UTP + L-glutamine + ATP + H2O = CTP + L-glutamate + ADP + phosphate + 2 H(+). It catalyses the reaction L-glutamine + H2O = L-glutamate + NH4(+). It carries out the reaction UTP + NH4(+) + ATP = CTP + ADP + phosphate + 2 H(+). It participates in pyrimidine metabolism; CTP biosynthesis via de novo pathway; CTP from UDP: step 2/2. With respect to regulation, allosterically activated by GTP, when glutamine is the substrate; GTP has no effect on the reaction when ammonia is the substrate. The allosteric effector GTP functions by stabilizing the protein conformation that binds the tetrahedral intermediate(s) formed during glutamine hydrolysis. Inhibited by the product CTP, via allosteric rather than competitive inhibition. In terms of biological role, catalyzes the ATP-dependent amination of UTP to CTP with either L-glutamine or ammonia as the source of nitrogen. Regulates intracellular CTP levels through interactions with the four ribonucleotide triphosphates. This chain is CTP synthase, found in Wolbachia pipientis wMel.